Here is a 250-residue protein sequence, read N- to C-terminus: Glucosamine-6-phosphate deaminase (250 aa).

Asp67 acts as the Proton acceptor; for enolization step in catalysis. Asn136 functions as the For ring-opening step in the catalytic mechanism. His138 serves as the catalytic Proton acceptor; for ring-opening step. Glu143 (for ring-opening step) is an active-site residue.

This sequence belongs to the glucosamine/galactosamine-6-phosphate isomerase family. NagB subfamily.

The catalysed reaction is alpha-D-glucosamine 6-phosphate + H2O = beta-D-fructose 6-phosphate + NH4(+). It functions in the pathway amino-sugar metabolism; N-acetylneuraminate degradation; D-fructose 6-phosphate from N-acetylneuraminate: step 5/5. Functionally, catalyzes the reversible isomerization-deamination of glucosamine 6-phosphate (GlcN6P) to form fructose 6-phosphate (Fru6P) and ammonium ion. The polypeptide is Glucosamine-6-phosphate deaminase (Oceanobacillus iheyensis (strain DSM 14371 / CIP 107618 / JCM 11309 / KCTC 3954 / HTE831)).